The chain runs to 242 residues: Acetoacetyl-CoA reductase (242 aa).

NADP(+)-binding positions include Arg-12–Ile-14 and Asn-82–Thr-86. Substrate is bound by residues Asp-88 and Gln-141–Gln-144. Tyr-147 functions as the Proton acceptor in the catalytic mechanism. Residue Pro-177–Ile-180 participates in NADP(+) binding. Residue Gly-178 to Tyr-179 participates in substrate binding.

It belongs to the short-chain dehydrogenases/reductases (SDR) family.

It is found in the cytoplasm. It catalyses the reaction a (3R)-3-hydroxyacyl-CoA + NADP(+) = a 3-oxoacyl-CoA + NADPH + H(+). It functions in the pathway biopolymer metabolism; poly-(R)-3-hydroxybutanoate biosynthesis. The protein is Acetoacetyl-CoA reductase (phaB) of Paracoccus denitrificans.